The chain runs to 352 residues: N-acetyl-gamma-glutamyl-phosphate reductase (352 aa).

Residue cysteine 155 is part of the active site.

Belongs to the NAGSA dehydrogenase family. Type 1 subfamily.

It localises to the cytoplasm. It carries out the reaction N-acetyl-L-glutamate 5-semialdehyde + phosphate + NADP(+) = N-acetyl-L-glutamyl 5-phosphate + NADPH + H(+). It functions in the pathway amino-acid biosynthesis; L-arginine biosynthesis; N(2)-acetyl-L-ornithine from L-glutamate: step 3/4. In terms of biological role, catalyzes the NADPH-dependent reduction of N-acetyl-5-glutamyl phosphate to yield N-acetyl-L-glutamate 5-semialdehyde. The sequence is that of N-acetyl-gamma-glutamyl-phosphate reductase from Gloeothece citriformis (strain PCC 7424) (Cyanothece sp. (strain PCC 7424)).